An 81-amino-acid chain; its full sequence is Acyl carrier protein (81 aa).

In terms of domain architecture, Carrier spans 4–79; that stretch reads SEIFGKVKDI…AAVDFIAGKV (76 aa). Ser39 bears the O-(pantetheine 4'-phosphoryl)serine mark.

It belongs to the acyl carrier protein (ACP) family. In terms of processing, 4'-phosphopantetheine is transferred from CoA to a specific serine of apo-ACP by AcpS. This modification is essential for activity because fatty acids are bound in thioester linkage to the sulfhydryl of the prosthetic group.

The protein localises to the cytoplasm. The protein operates within lipid metabolism; fatty acid biosynthesis. Functionally, carrier of the growing fatty acid chain in fatty acid biosynthesis. This chain is Acyl carrier protein, found in Acaryochloris marina (strain MBIC 11017).